We begin with the raw amino-acid sequence, 240 residues long: Phosphoribosylaminoimidazole-succinocarboxamide synthase (240 aa).

It belongs to the SAICAR synthetase family.

The enzyme catalyses 5-amino-1-(5-phospho-D-ribosyl)imidazole-4-carboxylate + L-aspartate + ATP = (2S)-2-[5-amino-1-(5-phospho-beta-D-ribosyl)imidazole-4-carboxamido]succinate + ADP + phosphate + 2 H(+). It functions in the pathway purine metabolism; IMP biosynthesis via de novo pathway; 5-amino-1-(5-phospho-D-ribosyl)imidazole-4-carboxamide from 5-amino-1-(5-phospho-D-ribosyl)imidazole-4-carboxylate: step 1/2. This chain is Phosphoribosylaminoimidazole-succinocarboxamide synthase, found in Wolbachia sp. subsp. Drosophila simulans (strain wRi).